The sequence spans 2230 residues: MFMMMNMSKQGIFQTVGSGLDHILSLADVEEEQMIQSVDRTAVTGASYFTSVDQSSVHTAEVGAHQTEPLKTSVDKPGSKKTQGEKFFLIHSADWLTTHALFHEVAKLDVVSLLYNEQFAVQGLLRYHTYARFGIEIQVQINPTPFQQGGLICAMVPGDQGYGSIASLTVYPHGLLNCNINNVVRIKVPFIYTRGAYHFKDPQYPVWELTIRVWSELNIGTGTSAYTSLNVLARFTDLELHGLTPLSTQMMRNEFRVSTTENVVNLSNYEDARAKMSFALDQEDWKTDPSQGGGIKITHFTTWTSIPTLAAQFAFNASASVGQQIKVIPVDPYFYQMTNSNPDQKCITALASVCQMFCFWRGDLVFDFQVFPTKYHSGRLLFCFVPGNELIDVSGITLKQATTAPCAVMDITGVQSTLRFRVPWISDTPYRVNRYTKSAHQKGEYTAIGKLIVYCYNRLTSPSNVASHVRVNVYLSAINLECFAPLYHAMDVTSQTGDDSGGFSTTVSTEQNAPDPQVGITTIKDLKGKANRGKMDVSGIQAPVGAITTIEDPVLAKKVPETFPELRPGESRHTSDHMSIYKFMGRSHFLCTFTFNANNREYTFPITLSSTSNPPHGLPSTLRWFFNLFQLYRGPLDLTIIITGATDVDGMAWFTPVGLAVDTPWVEKQSALTIDYKTALGAIRFNTRRTGNIQIRLPWYSYLYAVSGALDGLGDTTDSTFGLVSIQIANYNHSDEYLSFSCYLSVTEQSEFYFPRAPLNSNAMMVSESMLDRIASGDLESSVDDPRSAEDKRFESHIEQGKPYKELRMEVGKQRLKYAMEELSNEILPPPRKVKGLFSQAKISLFYTEDHEIVKLSWKGLTADTRALRRYGFSLAAGRSVWTLEMEAGVLTGRMIRLNDEKWTEIKDDKIVALVEKFTSNKNWSKVNFPHGMLDLEEIASNSKDFPNMSETDLCFLLHWLNPKKINLADRMLGLSGVQEIKEQGVGLIAECRTFLDSIAGTLKSMMFGFHQSVTVEIINTVLCFVKSGILLYVIQQLNQNEHSHIIGLLQVMNYADIGCSVISCGKIFSKMLETVFNWQMDSRMMALRTQSFSNWLRDICSGITIFKNFKDAIFWLYTKLKDYYDSNYGKKKDVLNVLKENQHRIEKAIEEADQFCVLQIQDVEKSEQYQKGVELIQKLRTVHSLAQVDSSLMSHLSPLRDCIARVHQKLKNLGSINQAMVTRCEPVVCYLYGKRGGGKSLTSIALATKICKHYGVEPEKNIYTKPVASDYWDGYSGQLVCIIDDIGQNTTDEDWSDFCQLVSGCPMRLNMASLEEKGRHFSSPFIIATSNWSNPSPKTVYVKEAIDRRLHYKIEVKPASFYKNAHNDMLNVNLARNNDAIKDMSCVDLLMDGHTVSLSELLNSLVMTVEIRKQNMSEFMKLWSQGVSDDDNDSAVAEFFQSFPSGEPSNSKLSSFFKAVTNHKWVAIGAAVGVLGVLVGGWFVYKHFTKEEPIPTEGVYHGVTKPKQVIKLDADPVDSQSTLEIAGLVRKNLVQFGVGEKNGCVRWVMNALGIKDDWLLVPSHAYKFEKDYQMMEFYFNRGGTYYSISAGNVVIQSLDVGFQDVVLMKVPTIPKFRDITEHFIKKNDVPRALNRLATLVTTVNGTPMLISEGPLKMEEKATYVHKRNDGTTVDLTVDQAWRGKGEGLPGMCGGALISSNQSIQNAILGIHVAGGNSILVAKLVTQEMFQNIEQKAIESQRIMKVEFTQCSMNVVSKTLFKKSPIHHHIDRNMINFPAVMPFSKAEIDPMAVMLSKYSLPIVEEPDDYKMASIYFQNKVMGKTFLVDDFLDIDMAITGAPGIDAINMDSSPGFPYVQEKLTKKDLIWLDENGLLLGVHPRLAQRILYNTVMMENCSDLDVVFTTCPKDELRPLDKVLESKTRAIDACPLDYTILCRIYWGPAISYFQLNPGFHTGVAIGIDPDRHWDELFKTMVRFGDVGLDLDFSSFDASLSPFMIREAGRILSEMSGTPSHFGEALINTIIYSKHLLYNCCYHVYGSMPSGSPCTALLNSIVNNVNLYYVFSKIFRKSPVFFGDALKILCYGDDVLIVFSRNVQIDNLESIGQKIVDEFGKLGMTATSADKSVPKLKPISELTFLKRSFNLVEDRIRPAISEKTIWSLVAWQRSNAEFEQNLENAQWFAFMHGFEFYQKFYHFVQSCLEKEMVEYRLKSYDWWRMKFYDQCFVCDLT.

Residues 59 to 80 form a disordered region; that stretch reads TAEVGAHQTEPLKTSVDKPGSK. 2 short sequence motifs ((L)YPX(n)L motif) span residues 171-175 and 204-209; these read YPHGL and YPVWEL. Residues 770–840 are involved in P1-2A pentamerization; sequence MLDRIASGDL…PRKVKGLFSQ (71 aa). Residues 1015–1035 traverse the membrane as a helical segment; the sequence is TVEIINTVLCFVKSGILLYVI. A membrane-penetrating ability region spans residues 1047-1074; it reads IGLLQVMNYADIGCSVISCGKIFSKMLE. The stretch at 1131 to 1156 forms a coiled coil; it reads KKKDVLNVLKENQHRIEKAIEEADQF. The SF3 helicase domain occupies 1208-1370; the sequence is HQKLKNLGSI…SFYKNAHNDM (163 aa). 1234–1241 provides a ligand contact to ATP; sequence GKRGGGKS. The helical transmembrane segment at 1466 to 1486 threads the bilayer; sequence WVAIGAAVGVLGVLVGGWFVY. Tyrosine 1501 carries the O-(5'-phospho-RNA)-tyrosine modification. In terms of domain architecture, Peptidase C3 spans 1516–1730; it reads DPVDSQSTLE…VAKLVTQEMF (215 aa). Catalysis depends on for protease 3C activity residues histidine 1565, aspartate 1605, and cysteine 1693. A RdRp catalytic domain is found at 1979–2100; it reads DVGLDLDFSS…VFSRNVQIDN (122 aa).

This sequence belongs to the picornaviridae polyprotein family. Homodimer. Homomultimer; probably interacts with membranes in a multimeric form. Seems to assemble into amyloid-like fibers. In terms of assembly, homodimer. Monomer. Interacts with protein 3CD. As to quaternary structure, interacts with host ACBD3. Interacts with protein 3AB. In terms of assembly, interacts with human MAVS. As to quaternary structure, homodimer; disulfide-linked. Homopentamer. Homooligomer. In terms of assembly, interacts with capsid protein VP2. Interacts with capsid protein VP3. As to quaternary structure, interacts with capsid protein VP1. Interacts with capsid protein VP3. Interacts with capsid protein VP1. Interacts with capsid protein VP2. Specific enzymatic cleavages by viral protease in vivo yield a variety of precursors and mature proteins. Polyprotein processing intermediates are produced, such as P1-2A which is a functional precursor of the structural proteins, VP0 which is a VP4-VP2 precursor, VP1-2A precursor, 3ABC precursor which is a stable and catalytically active precursor of 3A, 3B and 3C proteins, 3AB and 3CD precursors. The assembly signal 2A is removed from VP1-2A by a host protease, possibly host Cathepsin L. This cleavage occurs over a region of 3 amino-acids probably generating VP1 proteins with heterogeneous C-termini. In terms of processing, during virion maturation, immature virions are rendered infectious following cleavage of VP0 into VP4 and VP2. This maturation seems to be an autocatalytic event triggered by the presence of RNA in the capsid and is followed by a conformational change of the particle. Post-translationally, the assembly signal 2A is removed from VP1-2A by a host protease, possibly host Cathepsin L in naked virions. This cleavage does not occur in enveloped virions. This cleavage occurs over a region of 3 amino-acids probably generating VP1 proteins with heterogeneous C-termini. VPg is uridylylated prior to priming replication into VPg-pUpU. In terms of processing, unlike other picornaviruses, does not seem to be myristoylated.

It localises to the virion. The protein localises to the host endosome. It is found in the host multivesicular body. The protein resides in the host membrane. Its subcellular location is the host mitochondrion outer membrane. It localises to the host cytoplasm. The protein localises to the host cytoplasmic vesicle membrane. It carries out the reaction RNA(n) + a ribonucleoside 5'-triphosphate = RNA(n+1) + diphosphate. The catalysed reaction is a ribonucleoside 5'-triphosphate + H2O = a ribonucleoside 5'-diphosphate + phosphate + H(+). It catalyses the reaction Selective cleavage of Gln-|-Gly bond in the poliovirus polyprotein. In other picornavirus reactions Glu may be substituted for Gln, and Ser or Thr for Gly.. Capsid proteins VP1, VP2, and VP3 form a closed capsid enclosing the viral positive strand RNA genome. All these proteins contain a beta-sheet structure called beta-barrel jelly roll. Together they form an icosahedral capsid (T=3) composed of 60 copies of each VP1, VP2, and VP3, with a diameter of approximately 300 Angstroms. VP1 is situated at the 12 fivefold axes, whereas VP2 and VP3 are located at the quasi-sixfold axes. The naked capsid interacts with the host receptor HAVCR1 to provide virion attachment to and probably entry into the target cell. Functionally, VP0 precursor is a component of the immature procapsids. Its function is as follows. Plays a role in the assembly of the 12 pentamers into an icosahedral structure. Has not been detected in mature virions, supposedly owing to its small size. In terms of biological role, precursor component of immature procapsids that corresponds to an extended form of the structural protein VP1. After maturation, possibly by the host Cathepsin L, the assembly signal 2A is cleaved to give rise to the mature VP1 protein. Functions as a viroporin. Affects membrane integrity and causes an increase in membrane permeability. Involved in host intracellular membrane rearrangements probably to give rise to the viral factories. Does not disrupt calcium homeostasis or glycoprotein trafficking. Antagonizes the innate immune response of the host by suppressing IFN-beta synthesis, which it achieves by interfering with the RIG-I/IFIH1 pathway. Functionally, affects membrane integrity and causes an increase in membrane permeability. Its function is as follows. Associates with and induces structural rearrangements of intracellular membranes. Displays RNA-binding activity. In terms of biological role, the precursor 3ABC is targeted to the mitochondrial membrane where protease 3C activity cleaves and inhibits the host antiviral protein MAVS, thereby disrupting activation of IRF3 through the IFIH1/MDA5 pathway. In vivo, the protease activity of 3ABC precursor is more efficient in cleaving the 2BC precursor than that of protein 3C. The 3ABC precursor may therefore play a role in the proteolytic processing of the polyprotein. Possible viroporin. Interacts with the 3CD precursor and with RNA structures found at both the 5'- and 3'-termini of the viral genome. Since the 3AB precursor contains the hydrophobic domain 3A, it probably anchors the whole viral replicase complex to intracellular membranes on which viral RNA synthesis occurs. Functionally, may serve as membrane anchor to the 3AB and 3ABC precursors via its hydrophobic domain. May interact with RNA. Its function is as follows. Acts as a primer for viral RNA replication and remains covalently bound to viral genomic RNA. VPg is uridylylated prior to priming replication into VPg-pUpU. The VPg-pUpU is then used as primer on the genomic RNA poly(A) by the RNA-dependent RNA polymerase to replicate the viral genome. In terms of biological role, cysteine protease that generates mature viral proteins from the precursor polyprotein. In addition to its proteolytic activity, it binds to viral RNA, and thus influences viral genome replication. RNA and substrate bind cooperatively to the protease. Cleaves IKBKG/NEMO to impair innate immune signaling. Cleaves host PABPC1 which may participate in the switch of viral translation to RNA synthesis. Interacts with the 3AB precursor and with RNA structures found at both the 5'- and 3'-termini of the viral genome. Disrupts TLR3 signaling by degrading the host adapter protein TICAM1/TRIF. Functionally, RNA-directed RNA polymerase 3D-POL replicates genomic and antigenomic RNA by recognizing replications specific signals. This Callithrix (Owl-faced monkey) protein is Genome polyprotein.